The primary structure comprises 741 residues: Double-stranded RNA-specific editase 1 (741 aa).

A disordered region spans residues Met1–Pro79. Residue Ser26 is modified to Phosphoserine. A compositionally biased stretch (gly residues) spans Pro33 to Pro49. Residues Ser63–Thr73 show a composition bias toward basic residues. The DRBM 1 domain occupies Leu78–Gln144. Interaction with substrate RNA regions lie at residues Leu83–Glu88 and Val104–His105. Ser149 is subject to Phosphoserine. Residues Pro231–Asn298 form the DRBM 2 domain. Interaction with substrate RNA stretches follow at residues Val237–Glu242 and His259. The A to I editase domain maps to Ser370–Phe737. Position 394 (His394) interacts with Zn(2+). Glu396 functions as the Proton donor in the catalytic mechanism. Positions 400 and 401 each coordinate 1D-myo-inositol hexakisphosphate. A Zn(2+)-binding site is contributed by Cys451. A disordered region spans residues Arg486–Gly518. Polar residues predominate over residues Asp493–Gly503. Cys556 serves as a coordination point for Zn(2+). 1D-myo-inositol hexakisphosphate-binding residues include Lys559, Arg562, Lys669, Lys702, Lys712, and Lys730.

In terms of assembly, homodimer. Homodimerization is essential for its catalytic activity. Can form heterodimers with isoform 5 of ADAR/ADAR1. Requires 1D-myo-inositol hexakisphosphate as cofactor. In terms of tissue distribution, highly expressed in brain and heart and at lower levels in placenta. Fair expression in lung, liver and kidney. Detected in brain, heart, kidney, lung and liver (at protein level). Highly expressed in hippocampus and colon. Expressed in pediatric astrocytomas and the protein has a decreased RNA-editing activity. The decrease in RNA editing correlates with the grade of malignancy of the tumors, with the high grade tumors showing lower editing is seen.

The protein localises to the nucleus. The protein resides in the nucleolus. The enzyme catalyses adenosine in double-stranded RNA + H2O + H(+) = inosine in double-stranded RNA + NH4(+). In terms of biological role, catalyzes the hydrolytic deamination of adenosine to inosine in double-stranded RNA (dsRNA) referred to as A-to-I RNA editing. This may affect gene expression and function in a number of ways that include mRNA translation by changing codons and hence the amino acid sequence of proteins; pre-mRNA splicing by altering splice site recognition sequences; RNA stability by changing sequences involved in nuclease recognition; genetic stability in the case of RNA virus genomes by changing sequences during viral RNA replication; and RNA structure-dependent activities such as microRNA production or targeting or protein-RNA interactions. Can edit both viral and cellular RNAs and can edit RNAs at multiple sites (hyper-editing) or at specific sites (site-specific editing). Its cellular RNA substrates include: bladder cancer-associated protein (BLCAP), neurotransmitter receptors for glutamate (GRIA2 and GRIK2) and serotonin (HTR2C), GABA receptor (GABRA3) and potassium voltage-gated channel (KCNA1). Site-specific RNA editing of transcripts encoding these proteins results in amino acid substitutions which consequently alter their functional activities. Edits GRIA2 at both the Q/R and R/G sites efficiently but converts the adenosine in hotspot1 much less efficiently. Can exert a proviral effect towards human immunodeficiency virus type 1 (HIV-1) and enhances its replication via both an editing-dependent and editing-independent mechanism. The former involves editing of adenosines in the 5'UTR while the latter occurs via suppression of EIF2AK2/PKR activation and function. Can inhibit cell proliferation and migration and can stimulate exocytosis. Has a lower catalytic activity than isoform 2. Its function is as follows. Has a higher catalytic activity than isoform 1. The chain is Double-stranded RNA-specific editase 1 from Homo sapiens (Human).